The following is a 162-amino-acid chain: uncharacterized protein (162 aa).

This is an uncharacterized protein from Picosynechococcus sp. (strain ATCC 27264 / PCC 7002 / PR-6) (Agmenellum quadruplicatum).